The sequence spans 1238 residues: Multifunctional 2-oxoglutarate metabolism enzyme (1238 aa).

The interval 1–41 is 2-oxoglutarate dehydrogenase E1, N-terminal part; sequence MANISSPFGQNEWLVEEMYRKFRDDPSSVDPSWHEFLVDYN. The interval 42-97 is linker; it reads PESTAEPVLTDPTSTDKQPSATPQAKPAAAADPVASRAKPATTPTVANGTAAGSAA. The tract at residues 44-108 is disordered; sequence STAEPVLTDP…PAKTTTTPPI (65 aa). Low complexity predominate over residues 59–107; it reads QPSATPQAKPAAAADPVASRAKPATTPTVANGTAAGSAAAPAKTTTTPP. Residues 98–346 form a succinyltransferase E2 region; it reads APAKTTTTPP…LRTIHEMVLS (249 aa). The active-site Proton acceptor; for succinyltransferase activity is the His325. The segment at 347 to 1238 is 2-oxoglutarate dehydrogenase E1, C-terminal part; that stretch reads DSFWDEIFRE…QQEILDTAFG (892 aa). Arg551 contacts thiamine diphosphate. The 2-oxoglutarate site is built by His590 and Ser615. 6 residues coordinate thiamine diphosphate: Ser615, Leu617, Asp657, Ala658, Ala659, and Asn690. Asp657 is a binding site for Mg(2+). The Mg(2+) site is built by Asn690 and Ile692. The stretch at 795 to 825 forms a coiled coil; that stretch reads DISLKEAEDALRDYQGQLERVFNEVRDLEKH. His1032 is a 2-oxoglutarate binding site. 7 residues coordinate acetyl-CoA: Thr1050, Arg1066, Lys1101, Ser1104, Gln1154, Arg1161, and Arg1162.

It belongs to the 2-oxoacid dehydrogenase family. Kgd subfamily. In terms of assembly, homodimer. The 2-oxoglutarate dehydrogenase (ODH) complex contains multiple copies of three enzymatic components: 2-oxoglutarate dehydrogenase (E1), dihydrolipoamide succinyltransferase (E2) and lipoamide dehydrogenase (E3). The cofactor is Mg(2+). Thiamine diphosphate serves as cofactor.

The catalysed reaction is glyoxylate + 2-oxoglutarate + H(+) = 2-hydroxy-3-oxoadipate + CO2. The enzyme catalyses 2-oxoglutarate + H(+) = succinate semialdehyde + CO2. It catalyses the reaction N(6)-[(R)-lipoyl]-L-lysyl-[protein] + 2-oxoglutarate + H(+) = N(6)-[(R)-S(8)-succinyldihydrolipoyl]-L-lysyl-[protein] + CO2. It carries out the reaction N(6)-[(R)-dihydrolipoyl]-L-lysyl-[protein] + succinyl-CoA = N(6)-[(R)-S(8)-succinyldihydrolipoyl]-L-lysyl-[protein] + CoA. The protein operates within carbohydrate metabolism; tricarboxylic acid cycle; succinate from 2-oxoglutarate (transferase route): step 1/2. It functions in the pathway carbohydrate metabolism; tricarboxylic acid cycle; succinyl-CoA from 2-oxoglutarate (dehydrogenase route): step 1/1. Alpha-ketoglutarate dehydrogenase and decarboxylase activities are inhibited by unphosphorylated GarA, and allosterically activated by acetyl-CoA, the main substrate of the TCA cycle. Its function is as follows. Shows three enzymatic activities that share a first common step, the attack of thiamine-PP on 2-oxoglutarate (alpha-ketoglutarate, KG), leading to the formation of an enamine-thiamine-PP intermediate upon decarboxylation. Thus, displays KGD activity, catalyzing the decarboxylation from five-carbon 2-oxoglutarate to four-carbon succinate semialdehyde (SSA). Also catalyzes C-C bond formation between the activated aldehyde formed after decarboxylation of alpha-ketoglutarate and the carbonyl of glyoxylate (GLX), to yield 2-hydroxy-3-oxoadipate (HOA), which spontaneously decarboxylates to form 5-hydroxylevulinate (HLA). And is also a component of the 2-oxoglutarate dehydrogenase (ODH) complex, that catalyzes the overall conversion of 2-oxoglutarate to succinyl-CoA and CO(2). The KG decarboxylase and KG dehydrogenase reactions provide two alternative, tightly regulated, pathways connecting the oxidative and reductive branches of the TCA cycle. This Mycobacterium leprae (strain TN) protein is Multifunctional 2-oxoglutarate metabolism enzyme (kgd).